Consider the following 610-residue polypeptide: Methionine--tRNA ligase (610 aa).

The 'HIGH' region motif lies at 12-22 (PYANGPRHIGH). The Zn(2+) site is built by C144, C147, C157, and C160. The 'KMSKS' region signature appears at 348–352 (KFSSS). Residue S351 coordinates ATP.

It belongs to the class-I aminoacyl-tRNA synthetase family. MetG type 1 subfamily. As to quaternary structure, monomer. It depends on Zn(2+) as a cofactor.

It localises to the cytoplasm. It catalyses the reaction tRNA(Met) + L-methionine + ATP = L-methionyl-tRNA(Met) + AMP + diphosphate. Is required not only for elongation of protein synthesis but also for the initiation of all mRNA translation through initiator tRNA(fMet) aminoacylation. In Corynebacterium diphtheriae (strain ATCC 700971 / NCTC 13129 / Biotype gravis), this protein is Methionine--tRNA ligase.